The primary structure comprises 140 residues: MGLMTRIADKTGALGSVVSAMGCAACFPALASFGAAIGLGFLSQYEGLFISRLLPLFAALAFLANALGWFSHRQWLRSLLGMIGPAIVFAATVWLLGNWWTANLMYVGLALMIGVSIWDFVSPAHRRCGPDGCELPAKRL.

At 2–10 (GLMTRIADK) the chain is on the cytoplasmic side. A helical membrane pass occupies residues 11–31 (TGALGSVVSAMGCAACFPALA). The Hg(2+) site is built by glycine 22 and alanine 25. Topologically, residues 32 to 46 (SFGAAIGLGFLSQYE) are periplasmic. The helical transmembrane segment at 47–67 (GLFISRLLPLFAALAFLANAL) threads the bilayer. The Cytoplasmic portion of the chain corresponds to 68–78 (GWFSHRQWLRS). The helical transmembrane segment at 79-99 (LLGMIGPAIVFAATVWLLGNW) threads the bilayer. The Periplasmic segment spans residues 100–106 (WTANLMY). The helical transmembrane segment at 107-127 (VGLALMIGVSIWDFVSPAHRR) threads the bilayer. Over 128–140 (CGPDGCELPAKRL) the chain is Cytoplasmic.

The protein localises to the cell inner membrane. With respect to regulation, uptake of Hg(2+) is decreased by iodoacetamide and iodoacetate, and is completely inhibited by the thiol-modifying reagent N-ethylmaleimide (NEM). Its function is as follows. Involved in mercuric ion uptake and binding. MerC-mediated Hg(2+) uptake does not require MerP. This chain is Mercuric transport protein MerC, found in Shigella flexneri.